An 82-amino-acid chain; its full sequence is Large ribosomal subunit protein bL28 (82 aa).

Belongs to the bacterial ribosomal protein bL28 family.

The chain is Large ribosomal subunit protein bL28 from Vesicomyosocius okutanii subsp. Calyptogena okutanii (strain HA).